Reading from the N-terminus, the 240-residue chain is Uridylate kinase (240 aa).

Residue Lys-12–Gly-15 coordinates ATP. An involved in allosteric activation by GTP region spans residues Gly-20–Gly-25. Gly-54 is a binding site for UMP. Positions 55 and 59 each coordinate ATP. Residues Asp-74 and Thr-135–Thr-142 contribute to the UMP site. ATP-binding residues include Tyr-168 and Asp-171.

It belongs to the UMP kinase family. As to quaternary structure, homohexamer.

The protein localises to the cytoplasm. The catalysed reaction is UMP + ATP = UDP + ADP. Its pathway is pyrimidine metabolism; CTP biosynthesis via de novo pathway; UDP from UMP (UMPK route): step 1/1. Its activity is regulated as follows. Allosterically activated by GTP. Inhibited by UTP. Catalyzes the reversible phosphorylation of UMP to UDP. The chain is Uridylate kinase from Moorella thermoacetica (strain ATCC 39073 / JCM 9320).